Reading from the N-terminus, the 252-residue chain is Imidazole glycerol phosphate synthase subunit HisF (252 aa).

Active-site residues include Asp-11 and Asp-130.

This sequence belongs to the HisA/HisF family. Heterodimer of HisH and HisF.

The protein localises to the cytoplasm. It catalyses the reaction 5-[(5-phospho-1-deoxy-D-ribulos-1-ylimino)methylamino]-1-(5-phospho-beta-D-ribosyl)imidazole-4-carboxamide + L-glutamine = D-erythro-1-(imidazol-4-yl)glycerol 3-phosphate + 5-amino-1-(5-phospho-beta-D-ribosyl)imidazole-4-carboxamide + L-glutamate + H(+). Its pathway is amino-acid biosynthesis; L-histidine biosynthesis; L-histidine from 5-phospho-alpha-D-ribose 1-diphosphate: step 5/9. IGPS catalyzes the conversion of PRFAR and glutamine to IGP, AICAR and glutamate. The HisF subunit catalyzes the cyclization activity that produces IGP and AICAR from PRFAR using the ammonia provided by the HisH subunit. This is Imidazole glycerol phosphate synthase subunit HisF from Thermococcus onnurineus (strain NA1).